The following is a 219-amino-acid chain: Small ribosomal subunit protein uS3 (219 aa).

The 69-residue stretch at 38–106 folds into the KH type-2 domain; it reads IRKFIEKRLV…RVHINIVEIK (69 aa).

It belongs to the universal ribosomal protein uS3 family. As to quaternary structure, part of the 30S ribosomal subunit. Forms a tight complex with proteins S10 and S14.

Its function is as follows. Binds the lower part of the 30S subunit head. Binds mRNA in the 70S ribosome, positioning it for translation. This chain is Small ribosomal subunit protein uS3, found in Levilactobacillus brevis (strain ATCC 367 / BCRC 12310 / CIP 105137 / JCM 1170 / LMG 11437 / NCIMB 947 / NCTC 947) (Lactobacillus brevis).